The following is a 296-amino-acid chain: Porphobilinogen deaminase (296 aa).

An S-(dipyrrolylmethanemethyl)cysteine modification is found at Cys232.

Belongs to the HMBS family. In terms of assembly, monomer. Dipyrromethane is required as a cofactor.

It catalyses the reaction 4 porphobilinogen + H2O = hydroxymethylbilane + 4 NH4(+). Its pathway is porphyrin-containing compound metabolism; protoporphyrin-IX biosynthesis; coproporphyrinogen-III from 5-aminolevulinate: step 2/4. Tetrapolymerization of the monopyrrole PBG into the hydroxymethylbilane pre-uroporphyrinogen in several discrete steps. In Corynebacterium aurimucosum (strain ATCC 700975 / DSM 44827 / CIP 107346 / CN-1) (Corynebacterium nigricans), this protein is Porphobilinogen deaminase.